Here is a 129-residue protein sequence, read N- to C-terminus: Iron-sulfur cluster assembly 1 homolog, mitochondrial (129 aa).

The N-terminal 12 residues, 1 to 12, are a transit peptide targeting the mitochondrion; that stretch reads MSASIARATVRA. Positions 57, 121, and 123 each coordinate Fe cation.

It belongs to the HesB/IscA family.

Its subcellular location is the mitochondrion. Functionally, involved in the maturation of mitochondrial 4Fe-4S proteins functioning late in the iron-sulfur cluster assembly pathway. Probably involved in the binding of an intermediate of Fe/S cluster assembly. In Danio rerio (Zebrafish), this protein is Iron-sulfur cluster assembly 1 homolog, mitochondrial (isca1).